The sequence spans 201 residues: Putative 3-methyladenine DNA glycosylase (201 aa).

The protein belongs to the DNA glycosylase MPG family.

This Nitrosococcus oceani (strain ATCC 19707 / BCRC 17464 / JCM 30415 / NCIMB 11848 / C-107) protein is Putative 3-methyladenine DNA glycosylase.